We begin with the raw amino-acid sequence, 314 residues long: Methionyl-tRNA formyltransferase (314 aa).

109 to 112 lines the (6S)-5,6,7,8-tetrahydrofolate pocket; sequence SVLP.

It belongs to the Fmt family.

The enzyme catalyses L-methionyl-tRNA(fMet) + (6R)-10-formyltetrahydrofolate = N-formyl-L-methionyl-tRNA(fMet) + (6S)-5,6,7,8-tetrahydrofolate + H(+). Its function is as follows. Attaches a formyl group to the free amino group of methionyl-tRNA(fMet). The formyl group appears to play a dual role in the initiator identity of N-formylmethionyl-tRNA by promoting its recognition by IF2 and preventing the misappropriation of this tRNA by the elongation apparatus. The protein is Methionyl-tRNA formyltransferase of Dictyoglomus turgidum (strain DSM 6724 / Z-1310).